Here is a 244-residue protein sequence, read N- to C-terminus: MSLFTSFLLLCVLTAVYAETLTEGAQSSCPVIACSSPGLNGFPGKDGHDGAKGEKGEPGQGLRGLQGPPGKVGPAGPPGNPGSKGATGPKGDRGESVEFDTTNIDLEIAALRSELRAMRKWVLLSMSENVGKKYFMSSVRRMPLNRAKALCSELQGTVATPRNAEENRAIQNVAKDVAFLGITDQRTENVFEDLTGNRVRYTNWNEGEPNNVGSGENCVVLLTNGKWNDVPCSDSFLVVCEFSD.

Residues 1–18 (MSLFTSFLLLCVLTAVYA) form the signal peptide. The Collagen-like domain occupies 38 to 96 (GLNGFPGKDGHDGAKGEKGEPGQGLRGLQGPPGKVGPAGPPGNPGSKGATGPKGDRGES). 4-hydroxyproline is present on Pro-43. A disordered region spans residues 43–99 (PGKDGHDGAKGEKGEPGQGLRGLQGPPGKVGPAGPPGNPGSKGATGPKGDRGESVEF). Positions 45–57 (KDGHDGAKGEKGE) are enriched in basic and acidic residues. 4-hydroxyproline occurs at positions 58, 69, 78, and 81. A compositionally biased stretch (low complexity) spans 65-74 (LQGPPGKVGP). Positions 108–126 (IAALRSELRAMRKWVLLSM) form a coiled coil. The C-type lectin domain occupies 129 to 241 (NVGKKYFMSS…CSDSFLVVCE (113 aa)). 2 disulfide bridges follow: Cys-151–Cys-240 and Cys-218–Cys-232.

In terms of assembly, oligomeric complex of 3 or more homotrimers. Interacts with MASP1 and MASP2. Interacts with MEP1A and MEP1B and may inhibit their catalytic activity.

Its subcellular location is the secreted. In terms of biological role, calcium-dependent lectin involved in innate immune defense. Binds mannose, fucose and N-acetylglucosamine on different microorganisms and activates the lectin complement pathway. Binds to late apoptotic cells, as well as to apoptotic blebs and to necrotic cells, but not to early apoptotic cells, facilitating their uptake by macrophages. In Rattus norvegicus (Rat), this protein is Mannose-binding protein C (Mbl2).